An 89-amino-acid polypeptide reads, in one-letter code: Bombyxin B-1 (89 aa).

An N-terminal signal peptide occupies residues 1–19 (MKTSVMFMLVIVISLMCSG). 3 disulfides stabilise this stretch: cysteine 29–cysteine 75, cysteine 41–cysteine 88, and cysteine 74–cysteine 79. Residues 48–66 (GGAQYAPYFWTRQYLGSRG) constitute a propeptide, c peptide like.

The protein belongs to the insulin family. In terms of assembly, heterodimer of a B chain and an A chain linked by two disulfide bonds.

The protein resides in the secreted. Brain peptide responsible for activation of prothoracic glands to produce ecdysone in insects. The polypeptide is Bombyxin B-1 (BBXB1) (Bombyx mori (Silk moth)).